The chain runs to 758 residues: Dachshund homolog 1 (758 aa).

Disordered regions lie at residues 1 to 105 (MAVP…SNCN) and 134 to 185 (INAS…TPQN). Positions 20 to 53 (ISTSASSSGTTTSTSSATSSPAPSIGPPASSGPT) are enriched in low complexity. A compositionally biased stretch (gly residues) spans 73–102 (TGGGGGGGGSGGGGGSSGNGGGGGGGGGGS). Low complexity predominate over residues 140-163 (SSSSSSSSSSSSSSSSSSSSSSSS). A compositionally biased stretch (polar residues) spans 174-185 (STPSPVENTPQN). The DACHbox-N stretch occupies residues 189-275 (KMVDLRGAKV…LISRKDFETL (87 aa)). Residues 189 to 384 (KMVDLRGAKV…VGSSDGSWDK (196 aa)) are interaction with SIX6 and HDAC3. Disordered stretches follow at residues 280–302 (TNASSRPGRPPKRTQSVTSPENS), 358–414 (SNNQ…PLSH), 474–532 (SPPS…RIPV), and 544–564 (MGLSPNVLPGPKEGDLAGHDM). Polar residues-rich tracts occupy residues 292–301 (RTQSVTSPEN), 358–380 (SNNQHGADSENGDMNSSVGSSDG), and 387–399 (LPSSPSQGPQASI). Phosphoserine is present on serine 491. A compositionally biased stretch (low complexity) spans 506-524 (SHPSSHRSSSVSSSPARTE). Residues 555-564 (KEGDLAGHDM) are compositionally biased toward basic and acidic residues. A DACHbox-C region spans residues 616 to 696 (SSIETLLTNI…KAKRKLQEAL (81 aa)). The tract at residues 627 to 706 (GLLKVAIDNA…EFETKRREQA (80 aa)) is interaction with SIN3A. Positions 630 to 718 (KVAIDNARAQ…TLKQAASTDS (89 aa)) form a coiled coil.

Belongs to the DACH/dachshund family. As to quaternary structure, interacts with SIX1, SIX6 and EYA3. Interacts with NCOR1 and HDAC3 through its N-terminus. Interacts with SIN3A through its C-terminus. Interacts with SMAD3 and SMAD4. As to expression, widely expressed. Isoform 2 is found in brain, heart, kidney, liver, leukocytes and spleen. Isoform 3 is found in liver and heart. Isoform 4 is found in spleen.

The protein resides in the nucleus. Functionally, transcription factor that is involved in regulation of organogenesis. Seems to be a regulator of SIX1, SIX6 and probably SIX5. Corepression of precursor cell proliferation in myoblasts by SIX1 is switched to coactivation through recruitment of EYA3 to the SIX1-DACH1 complex. Transcriptional activation also seems to involve association of CREBBP. Seems to act as a corepressor of SIX6 in regulating proliferation by directly repressing cyclin-dependent kinase inhibitors, including the p27Kip1 promoter. Inhibits TGF-beta signaling through interaction with SMAD4 and NCOR1. Binds to chromatin DNA via its DACHbox-N domain. This chain is Dachshund homolog 1 (DACH1), found in Homo sapiens (Human).